The chain runs to 237 residues: Ribosomal RNA small subunit methyltransferase G (237 aa).

S-adenosyl-L-methionine-binding positions include G78, F83, A129 to E130, and R148.

Belongs to the methyltransferase superfamily. RNA methyltransferase RsmG family.

It localises to the cytoplasm. Its function is as follows. Specifically methylates the N7 position of a guanine in 16S rRNA. This chain is Ribosomal RNA small subunit methyltransferase G, found in Streptococcus pyogenes serotype M6 (strain ATCC BAA-946 / MGAS10394).